The chain runs to 899 residues: Linoleate 13S-lipoxygenase 2-1, chloroplastic (899 aa).

A chloroplast-targeting transit peptide spans 1–40 (MLKPQLQQSSQSTKALIPSWNTNPLFLASFPINILNKNFR). Residues 78–200 (VQKQVNLNLS…DNPDKRIFFT (123 aa)) form the PLAT domain. The Lipoxygenase domain occupies 203–899 (SYLPSQTPSG…GKGVPYSISI (697 aa)). The interval 252–287 (SNNDDAKRPVLGGKELPYPRRCKTGRPRSKKDPLSE) is disordered. Residues 271 to 280 (RRCKTGRPRS) are compositionally biased toward basic residues. Residues His557, His562, His749, Asn753, and Ile899 each contribute to the Fe cation site.

The protein belongs to the lipoxygenase family. Monomer. Fe cation serves as cofactor. As to expression, expressed in leaves and floral buds.

Its subcellular location is the plastid. It is found in the chloroplast stroma. It localises to the chloroplast thylakoid. It carries out the reaction (9Z,12Z)-octadecadienoate + O2 = (13S)-hydroperoxy-(9Z,11E)-octadecadienoate. It catalyses the reaction (9Z,12Z,15Z)-octadecatrienoate + O2 = (13S)-hydroperoxy-(9Z,11E,15Z)-octadecatrienoate. Its pathway is lipid metabolism; oxylipin biosynthesis. In terms of biological role, plant lipoxygenase involved in a number of diverse aspects of plant physiology including growth and development, pest resistance, and senescence. May not be involved in the bulk production of jasmonate upon wounding. Catalyzes the hydroperoxidation of lipids containing a cis,cis-1,4-pentadiene structure. Linolenic acid is the preferred substrate, before linoleic and arachidonic acids. Also has some activity with phosphatidylglycerol, but not with galactolipids. This chain is Linoleate 13S-lipoxygenase 2-1, chloroplastic, found in Solanum tuberosum (Potato).